Consider the following 212-residue polypeptide: Ras-related protein Rab-15 (212 aa).

Serine 17, glycine 18, valine 19, glycine 20, lysine 21, threonine 22, cysteine 23, serine 35, serine 39, and threonine 40 together coordinate GTP. Threonine 22 contributes to the Mg(2+) binding site. 2 short sequence motifs (switch) span residues asparagine 31–phenylalanine 45 and aspartate 63–arginine 80. Residues threonine 40 and aspartate 63 each coordinate Mg(2+). Glycine 66, asparagine 121, lysine 122, aspartate 124, serine 151, and alanine 152 together coordinate GTP. S-geranylgeranyl cysteine attachment occurs at residues cysteine 210 and cysteine 212. The residue at position 212 (cysteine 212) is a Cysteine methyl ester.

It belongs to the small GTPase superfamily. Rab family. In terms of assembly, the GTP bound form of RAB15 interacts with REP15. Interacts (GTP-bound form) with MICAL1, MICAL3, MICALCL, EHBP1 and EHBP1L1. Mg(2+) serves as cofactor. Expressed predominantly in neural tissues.

Its subcellular location is the cell membrane. The enzyme catalyses GTP + H2O = GDP + phosphate + H(+). Its activity is regulated as follows. Regulated by guanine nucleotide exchange factors (GEFs) which promote the exchange of bound GDP for free GTP. Regulated by GTPase activating proteins (GAPs) which increase the GTP hydrolysis activity. Inhibited by GDP dissociation inhibitors (GDIs). Functionally, the small GTPases Rab are key regulators of intracellular membrane trafficking, from the formation of transport vesicles to their fusion with membranes. Rabs cycle between an inactive GDP-bound form and an active GTP-bound form that is able to recruit to membranes different sets of downstream effectors directly responsible for vesicle formation, movement, tethering and fusion. RAB15 may act in concert with RAB3A in regulating aspects of synaptic vesicle membrane flow within the nerve terminal. The polypeptide is Ras-related protein Rab-15 (Rattus norvegicus (Rat)).